We begin with the raw amino-acid sequence, 282 residues long: MELIQCIDEMQSIAQAARANGKRIALVPTMGYLHQGHASLMVEGQKRADLLVASIFVNPTQFGVGEDFDSYPRDMENDMRIAEAAGVDLIFAPRAADMYPADYQTYVNVEELTLPLCGANRPGHFRGVTTVVAKFFNIVSPHVALFGQKDYQQLAVIRQMVADLNMPVEVIGMPIVREADGLAMSSRNSYLSPAERVSALCLSNSLNAVRTAFCKGERSVAALKNLVLDMISKERCAAIDYVEFRHGLNLAAVDTADEQTVVALAVKIGKTRLIDNRVLGEE.

30-37 (MGYLHQGH) serves as a coordination point for ATP. The Proton donor role is filled by His37. Gln61 contacts (R)-pantoate. Gln61 is a binding site for beta-alanine. 147 to 150 (GQKD) is a binding site for ATP. Gln153 contributes to the (R)-pantoate binding site. ATP-binding positions include Val176 and 184 to 187 (MSSR).

This sequence belongs to the pantothenate synthetase family. As to quaternary structure, homodimer.

It is found in the cytoplasm. The catalysed reaction is (R)-pantoate + beta-alanine + ATP = (R)-pantothenate + AMP + diphosphate + H(+). It functions in the pathway cofactor biosynthesis; (R)-pantothenate biosynthesis; (R)-pantothenate from (R)-pantoate and beta-alanine: step 1/1. Catalyzes the condensation of pantoate with beta-alanine in an ATP-dependent reaction via a pantoyl-adenylate intermediate. In Geotalea daltonii (strain DSM 22248 / JCM 15807 / FRC-32) (Geobacter daltonii), this protein is Pantothenate synthetase.